The following is a 421-amino-acid chain: Serine hydroxymethyltransferase (421 aa).

Residues leucine 121 and 125–127 (GHL) each bind (6S)-5,6,7,8-tetrahydrofolate. The residue at position 229 (lysine 229) is an N6-(pyridoxal phosphate)lysine.

Belongs to the SHMT family. Homodimer. It depends on pyridoxal 5'-phosphate as a cofactor.

It localises to the cytoplasm. The catalysed reaction is (6R)-5,10-methylene-5,6,7,8-tetrahydrofolate + glycine + H2O = (6S)-5,6,7,8-tetrahydrofolate + L-serine. Its pathway is one-carbon metabolism; tetrahydrofolate interconversion. It functions in the pathway amino-acid biosynthesis; glycine biosynthesis; glycine from L-serine: step 1/1. In terms of biological role, catalyzes the reversible interconversion of serine and glycine with tetrahydrofolate (THF) serving as the one-carbon carrier. This reaction serves as the major source of one-carbon groups required for the biosynthesis of purines, thymidylate, methionine, and other important biomolecules. Also exhibits THF-independent aldolase activity toward beta-hydroxyamino acids, producing glycine and aldehydes, via a retro-aldol mechanism. This is Serine hydroxymethyltransferase from Actinobacillus pleuropneumoniae serotype 7 (strain AP76).